Here is a 164-residue protein sequence, read N- to C-terminus: MAGKKTKSGMISHGMAAQNRKGRFDYTILETTEAGIVLKGPEVKSLRLGRATITEAYAAERDGEIWLFNSYIPEYQGGVLSRFEPRAPRKLLMHRKQIAHFLGAVSRAGASLVPLDIHFNARGMAKVTLGLGQGRRKEDKRHAIAERDWKRDKARLVRSSGKDY.

The protein belongs to the SmpB family.

The protein resides in the cytoplasm. In terms of biological role, required for rescue of stalled ribosomes mediated by trans-translation. Binds to transfer-messenger RNA (tmRNA), required for stable association of tmRNA with ribosomes. tmRNA and SmpB together mimic tRNA shape, replacing the anticodon stem-loop with SmpB. tmRNA is encoded by the ssrA gene; the 2 termini fold to resemble tRNA(Ala) and it encodes a 'tag peptide', a short internal open reading frame. During trans-translation Ala-aminoacylated tmRNA acts like a tRNA, entering the A-site of stalled ribosomes, displacing the stalled mRNA. The ribosome then switches to translate the ORF on the tmRNA; the nascent peptide is terminated with the 'tag peptide' encoded by the tmRNA and targeted for degradation. The ribosome is freed to recommence translation, which seems to be the essential function of trans-translation. This chain is SsrA-binding protein, found in Gluconobacter oxydans (strain 621H) (Gluconobacter suboxydans).